The sequence spans 156 residues: Small ribosomal subunit protein uS7c (156 aa).

This sequence belongs to the universal ribosomal protein uS7 family. As to quaternary structure, part of the 30S ribosomal subunit.

It localises to the plastid. It is found in the chloroplast. Its function is as follows. One of the primary rRNA binding proteins, it binds directly to 16S rRNA where it nucleates assembly of the head domain of the 30S subunit. The chain is Small ribosomal subunit protein uS7c (rps7) from Guillardia theta (Cryptophyte).